The primary structure comprises 705 residues: MLSTLARAATRRPLTVMLLWGLFLLLGFGLGTGVFGRLSDDVPDVPGTESQVAAEHLDGLDPAGDSITGVVEAAAVADPAVRAEVRRAVADLREVAGVAEVPDPYATPGTVAEDGRALVVSVTLEGGLDDDAEEAAVDDAADRLHGIDGSAVSGVHVSGGPLLGQQLGERAQEDVKNAELISLPVVLVLLLVVFGGLRAAGLPLLVAVAGIAGAFLALFGFSHVTDISVYAIQVTTMLGLGLAVDYALLMLVRFREERRHIPDVVEAVHRTVAAAGRTVLFSGLTVAVSLAGLLVFPSTFLRSMGLAVAAVVVVDMLAALTLLPALLTRFGGRIPPAKARPEEEGRLFARLARFAARRRVAVLAVAVPALLVVALPVTGMSINLGDARQLPKSTEARQLYDAIEAHFPPGTGVSPVTVVLRPGTDTATADRIGAIAGGTTVRDLPGGTTVLELPAGGAADGPAATELVERVRDLRGDAPVQVTGSAAQLVDFRQMLADRAPWAALTVLTGIFVLLFAFTGSVLLPLRTVATTLLSLGAALGAVVWVFQDGHLAGPIGAEGLGALSLTAPPLIIAIAFGLAMDYELFILARMREARERTGDDREAVVTGLRRSGRVVTCAALLLAVVFGAFMTGGFSPILQIGLGLTLAVLIDATVVRMLLVPATMALLGRHAWWAPKPLRRAHERFGVREEAPGPAPAPPQPAAR.

Transmembrane regions (helical) follow at residues 16–36 (VMLL…GVFG), 144–164 (LHGI…PLLG), 177–197 (NAEL…FGGL), 201–221 (GLPL…LFGF), 232–252 (IQVT…LMLV), 280–300 (LFSG…PSTF), 306–326 (LAVA…LPAL), 360–380 (VAVL…VTGM), 504–524 (ALTV…SVLL), 528–548 (TVAT…WVFQ), 561–581 (LGAL…GLAM), 615–635 (VVTC…TGGF), and 636–656 (SPIL…ATVV).

This sequence belongs to the resistance-nodulation-cell division (RND) (TC 2.A.6) family. MmpL subfamily.

It is found in the cell membrane. This chain is Putative membrane protein SCO6666, found in Streptomyces coelicolor (strain ATCC BAA-471 / A3(2) / M145).